The primary structure comprises 275 residues: Pyrroline-5-carboxylate reductase (275 aa).

Belongs to the pyrroline-5-carboxylate reductase family.

The protein localises to the cytoplasm. It catalyses the reaction L-proline + NADP(+) = (S)-1-pyrroline-5-carboxylate + NADPH + 2 H(+). The catalysed reaction is L-proline + NAD(+) = (S)-1-pyrroline-5-carboxylate + NADH + 2 H(+). Its pathway is amino-acid biosynthesis; L-proline biosynthesis; L-proline from L-glutamate 5-semialdehyde: step 1/1. Its function is as follows. Catalyzes the reduction of 1-pyrroline-5-carboxylate (PCA) to L-proline. In Pasteurella multocida (strain Pm70), this protein is Pyrroline-5-carboxylate reductase.